Reading from the N-terminus, the 391-residue chain is Multidrug resistance protein MdtL (391 aa).

12 helical membrane passes run 4-24, 42-62, 69-89, 93-113, 131-151, 158-178, 203-222, 245-265, 269-289, 293-313, 324-346, and 363-383; these read FLIC…MYLV, IAFS…GKVA, PVAI…SLAE, LFLA…VVAF, LLNG…HLIM, SLFW…LFIL, FFLS…LTFV, ALTA…LGIF, TLMI…AVSP, ISLF…GVAM, AGVA…IWLA, and ACSI…PVAA.

The protein belongs to the major facilitator superfamily. DHA1 family. MdtL (TC 2.A.1.2.22) subfamily.

It localises to the cell inner membrane. Functionally, confers resistance to chloramphenicol. The protein is Multidrug resistance protein MdtL of Escherichia fergusonii (strain ATCC 35469 / DSM 13698 / CCUG 18766 / IAM 14443 / JCM 21226 / LMG 7866 / NBRC 102419 / NCTC 12128 / CDC 0568-73).